Consider the following 857-residue polypeptide: Glucans biosynthesis glucosyltransferase H (857 aa).

6 helical membrane passes run 142–162 (ILLA…KGIL), 196–216 (ILIL…TALM), 515–535 (VFLT…FLVL), 572–592 (LFST…ILIW), 606–626 (TLSM…RMIF), and 682–702 (FLWW…VSVI).

It belongs to the glycosyltransferase 2 family. OpgH subfamily.

It is found in the cell inner membrane. The protein operates within glycan metabolism; osmoregulated periplasmic glucan (OPG) biosynthesis. Involved in the biosynthesis of osmoregulated periplasmic glucans (OPGs). This is Glucans biosynthesis glucosyltransferase H from Pseudomonas putida (strain ATCC 700007 / DSM 6899 / JCM 31910 / BCRC 17059 / LMG 24140 / F1).